A 1305-amino-acid chain; its full sequence is Nonribosomal peptide synthetase hkm11 (1305 aa).

The interval 278–672 is adenylation; sequence TYGELDRWAK…GEIEHHLRPK (395 aa). The 77-residue stretch at 788–864 folds into the Carrier domain; sequence APTTEQEALL…SLASRMRQYN (77 aa). Ser-825 carries the post-translational modification O-(pantetheine 4'-phosphoryl)serine. The condensation stretch occupies residues 926–1166; sequence KGQLDRHQLQ…LCLNITAVRV (241 aa).

Belongs to the NRP synthetase family.

The catalysed reaction is hancockiamide D + (E)-cinnamate + ATP = hancockiamide A + AMP + diphosphate. The enzyme catalyses hancockiamide H + (E)-cinnamate + ATP = hancockiamide G + AMP + diphosphate. Its pathway is secondary metabolite biosynthesis. Functionally, nonribosomal peptide synthetase; part of the gene cluster that mediates the biosynthesis of hancockiamides, an unusual new family of N-cinnamoylated piperazines. The NRPS hkm10 and the NmrA-like reductase hkm9 are proposed to convert two molecules of L-Phe to the intermediary piperazine called xenocockiamide A. Xenocockiamide A is then converted to hancockiamide D via a series of hydroxylations and O-methylations. The tyrosinase hkm6 may catalyze an aromatic hydroxylation, then the 2-oxoglutarate-dependent Fe(II) dioxygenase hkm4 and the FAD-dependent phenol hydroxylase hkm7 may catalyze consecutive hydroxylations to install 2 more hydroxy groups, and the methyltransferase hkm8 probably catalyzes two methylations using 2 molecules of S-adenosyl-L-methionine (SAM). The NRPS hkm11 activates and transfers trans-cinnamate supplied by the PAL hkm12 to hancockiamide D and produces hancockiamide A. NRPS Hkm11 has the flexibility to tolerate the bulky hancockiamide G as a substrate and the absence of the acetyl-transferase hkm3 opens up the opportunity for hkm11 to introduce a second N-cinnamoyl moiety. The cytochrome P450 monooxygenase hkm5 catalyzes the methylenedioxy bridge formation, converting hancockiamide A into hancockiamide G. Hkm5 can also convert hancockiamide B into hancockiamide C, and hancockiamide D into hancockiamide H. The N-acetyltransferase hkm3 finally transfers an acetyl group to 1-N of piperazine, converting hancockiamide A into hancockiamide B and hancockiamide G into hancockiamide C. The chain is Nonribosomal peptide synthetase hkm11 from Aspergillus hancockii.